The sequence spans 325 residues: CRISPR-associated endonuclease Cas1 3 (325 aa).

Mn(2+)-binding residues include E152, H217, and E232.

This sequence belongs to the CRISPR-associated endonuclease Cas1 family. As to quaternary structure, homodimer, forms a heterotetramer with a Cas2 homodimer. Requires Mg(2+) as cofactor. Mn(2+) is required as a cofactor.

Its function is as follows. CRISPR (clustered regularly interspaced short palindromic repeat), is an adaptive immune system that provides protection against mobile genetic elements (viruses, transposable elements and conjugative plasmids). CRISPR clusters contain spacers, sequences complementary to antecedent mobile elements, and target invading nucleic acids. CRISPR clusters are transcribed and processed into CRISPR RNA (crRNA). Acts as a dsDNA endonuclease. Involved in the integration of spacer DNA into the CRISPR cassette. The sequence is that of CRISPR-associated endonuclease Cas1 3 from Thermodesulfovibrio yellowstonii (strain ATCC 51303 / DSM 11347 / YP87).